The following is a 944-amino-acid chain: Translation initiation factor IF-2 (944 aa).

Positions 61-281 (IQANQPAKNP…TAKNNKSHKI (221 aa)) are disordered. Residues 132-150 (TFENQTPPTENTPKVVSHS) show a composition bias toward polar residues. Over residues 151–169 (QIEKAKQKLQEIQKSREAL) the composition is skewed to basic and acidic residues. The span at 175-185 (SNANNASNTNN) shows a compositional bias: low complexity. Residues 186-203 (AKKEISEVKKQEQEIKRH) are compositionally biased toward basic and acidic residues. Residues 204-215 (ENIKRRTGFRVI) show a composition bias toward basic residues. Over residues 244–259 (EDIKKEWQEKDKQEAK) the composition is skewed to basic and acidic residues. A tr-type G domain is found at 443-612 (ERPPVVTIMG…LIQADIMELK (170 aa)). The interval 452–459 (GHVDHGKT) is G1. 452–459 (GHVDHGKT) contacts GTP. The tract at residues 477-481 (GITQH) is G2. The interval 498–501 (DTPG) is G3. Residues 498-502 (DTPGH) and 552-555 (NKMD) each bind GTP. The segment at 552 to 555 (NKMD) is G4. The tract at residues 588 to 590 (SAK) is G5.

The protein belongs to the TRAFAC class translation factor GTPase superfamily. Classic translation factor GTPase family. IF-2 subfamily.

The protein localises to the cytoplasm. In terms of biological role, one of the essential components for the initiation of protein synthesis. Protects formylmethionyl-tRNA from spontaneous hydrolysis and promotes its binding to the 30S ribosomal subunits. Also involved in the hydrolysis of GTP during the formation of the 70S ribosomal complex. In Helicobacter pylori (strain HPAG1), this protein is Translation initiation factor IF-2.